Here is a 148-residue protein sequence, read N- to C-terminus: MKVILLQDVKPLGKKGEIVNVSDGYARNNIIPKKLGVEATPKNLNDLKLQNQHADKVAQENYESALALAKVVENTKVVVKLRSGEGGRTFGSISTKEISAAAKEQHGLELDKKKMQLNESIKALGNYEVPVKLHPKVTANLTVSVVEG.

This sequence belongs to the bacterial ribosomal protein bL9 family.

Functionally, binds to the 23S rRNA. In Agathobacter rectalis (strain ATCC 33656 / DSM 3377 / JCM 17463 / KCTC 5835 / VPI 0990) (Eubacterium rectale), this protein is Large ribosomal subunit protein bL9.